The following is a 555-amino-acid chain: Transmembrane protein 87A (555 aa).

An N-terminal signal peptide occupies residues 1 to 21 (MAVAAWLQVSPVIFLLLGAQP). Residues 22–225 (FPLSFLGAGP…YEYLTLEDYP (204 aa)) are Lumenal-facing. 2 cysteine pairs are disulfide-bonded: cysteine 74/cysteine 128 and cysteine 89/cysteine 431. Residues asparagine 79, asparagine 157, and asparagine 160 are each glycosylated (N-linked (GlcNAc...) asparagine). The helical transmembrane segment at 226 to 246 (LMIFFMVMCIVYVLFGVLWLA) threads the bilayer. Over 247–257 (WSACYWRDLLR) the chain is Cytoplasmic. A helical membrane pass occupies residues 258–278 (IQFWIGAVIFLGMFEKAVFYA). Over 279 to 305 (EFQNIRYKGESVQNALVLAELLSAVKR) the chain is Lumenal. Residues 306-322 (SLARTLVIIVSLGYGIV) traverse the membrane as a helical segment. Residues 323–325 (KPR) lie on the Cytoplasmic side of the membrane. The helical transmembrane segment at 326-346 (LGVTLHKVVVAGALYLLFSGM) threads the bilayer. Residues 347–361 (EGVLRVTGAQTDLAS) lie on the Lumenal side of the membrane. Residues 362-382 (LAFIPLAFLDTALCWWIFISL) form a helical membrane-spanning segment. Residues 383–403 (TQTMKLLKLRRNIVKLSLYRH) lie on the Cytoplasmic side of the membrane. Residues 404-424 (FTNTLILAVAASIVFIIWTTM) form a helical membrane-spanning segment. Topologically, residues 425 to 437 (KFRIVTCQSDWRE) are lumenal. A helical membrane pass occupies residues 438-458 (LWVDDAIWRLLFSMILFVIMI). At 459–555 (LWRPSANNQR…ITHFERSKME (97 aa)) the chain is on the cytoplasmic side. The tract at residues 491–515 (SFEGMKMRSTKQEPNGTSKVNKAQE) is disordered. Residues 502–511 (QEPNGTSKVN) are compositionally biased toward polar residues. Serine 540 is subject to Phosphoserine.

This sequence belongs to the LU7TM family. TMEM87 subfamily. In terms of assembly, may interact with STOML3; STOML3 potentiates the mechanosensitive ion channel activity associated with TMEM87A. As to expression, highly expressed in sensory neurons responsive to mechanical force.

It localises to the cell membrane. The protein resides in the golgi apparatus membrane. The protein localises to the cell projection. Its subcellular location is the ruffle. Functionally, potential monoatomic ion channel gated by mechanical force, implicated in normal touch sensitivity through the generation of mechanically activated currents. However, a direct channel activity is debated and an alternative could be that it functions as a chaperone for an unidentified mechanosensitive ion channel. Could also be involved in cell mechanosensitivity regulating cell adhesion and migration. May also be involved in retrograde transport from endosomes to the trans-Golgi network (TGN). This Mus musculus (Mouse) protein is Transmembrane protein 87A.